The chain runs to 427 residues: Histidinol dehydrogenase (427 aa).

NAD(+) contacts are provided by tyrosine 123, glutamine 185, and asparagine 208. Positions 231, 253, and 256 each coordinate substrate. Residues glutamine 253 and histidine 256 each coordinate Zn(2+). Residues glutamate 321 and histidine 322 each act as proton acceptor in the active site. Substrate-binding residues include histidine 322, aspartate 355, glutamate 409, and histidine 414. Residue aspartate 355 participates in Zn(2+) binding. Histidine 414 serves as a coordination point for Zn(2+).

Belongs to the histidinol dehydrogenase family. It depends on Zn(2+) as a cofactor.

It catalyses the reaction L-histidinol + 2 NAD(+) + H2O = L-histidine + 2 NADH + 3 H(+). Its pathway is amino-acid biosynthesis; L-histidine biosynthesis; L-histidine from 5-phospho-alpha-D-ribose 1-diphosphate: step 9/9. Catalyzes the sequential NAD-dependent oxidations of L-histidinol to L-histidinaldehyde and then to L-histidine. The polypeptide is Histidinol dehydrogenase (hisD) (Bacillus subtilis (strain 168)).